The chain runs to 131 residues: Transcription antitermination protein NusB (131 aa).

This sequence belongs to the NusB family.

Involved in transcription antitermination. Required for transcription of ribosomal RNA (rRNA) genes. Binds specifically to the boxA antiterminator sequence of the ribosomal RNA (rrn) operons. This is Transcription antitermination protein NusB from Campylobacter curvus (strain 525.92).